Here is a 403-residue protein sequence, read N- to C-terminus: MKNTNDIAVLIVDDSALMRKVIGKVIEGAPGLSIAGKAMNGRFALDMLERVQPDVILLDLEMPHMNGLQFLEQRKRLRIDIPVIILSSIAKEGARVTMQCLELGASDFVTKPFGSESAHLRTVSRKIVDYVTAYGRRYKLLRRTRRCLAMDTPVERPAGEEDLNCLDTQERASLPSVCARAPARDRASYTITPTEGARQTRIVPLRESGALQIIAIGVSTGGPSALRHIFAQLDADLPQPVVVVQHMPAGFTREFAYSLNQVCALEVKEAQEGDLVRRGRVLIAPGDRHLTVERRSLATVAHINSDEPENGHRPSVDVLFESVARHFENRALGILMTGMGRDGAAQLARLYTEGSRTIAQDADSCIVYGMPRVACELGAVGEQVSLDDMAATINRYGKVFASS.

The 119-residue stretch at 8-126 (AVLIVDDSAL…SAHLRTVSRK (119 aa)) folds into the Response regulatory domain. Aspartate 59 carries the 4-aspartylphosphate modification. The CheB-type methylesterase domain maps to 204 to 393 (PLRESGALQI…VSLDDMAATI (190 aa)). Catalysis depends on residues serine 219, histidine 246, and aspartate 342.

Belongs to the CheB family. Post-translationally, phosphorylated by CheA. Phosphorylation of the N-terminal regulatory domain activates the methylesterase activity.

The protein resides in the cytoplasm. It catalyses the reaction [protein]-L-glutamate 5-O-methyl ester + H2O = L-glutamyl-[protein] + methanol + H(+). The catalysed reaction is L-glutaminyl-[protein] + H2O = L-glutamyl-[protein] + NH4(+). Involved in chemotaxis. Part of a chemotaxis signal transduction system that modulates chemotaxis in response to various stimuli. Catalyzes the demethylation of specific methylglutamate residues introduced into the chemoreceptors (methyl-accepting chemotaxis proteins or MCP) by CheR. Also mediates the irreversible deamidation of specific glutamine residues to glutamic acid. The polypeptide is Protein-glutamate methylesterase/protein-glutamine glutaminase (Treponema pallidum (strain Nichols)).